Reading from the N-terminus, the 150-residue chain is Transcription antitermination protein NusB (150 aa).

This sequence belongs to the NusB family.

In terms of biological role, involved in transcription antitermination. Required for transcription of ribosomal RNA (rRNA) genes. Binds specifically to the boxA antiterminator sequence of the ribosomal RNA (rrn) operons. In Streptococcus pyogenes serotype M1, this protein is Transcription antitermination protein NusB.